We begin with the raw amino-acid sequence, 302 residues long: B3 domain-containing protein At3g17010 (302 aa).

Residues 21-116 (FFKIFQRADL…VFHVNIYEQN (96 aa)) constitute a DNA-binding region (TF-B3 1). Residues 123–192 (PRKFQTMGPS…KVKKKSKSKS (70 aa)) are disordered. Residues 135 to 174 (IKKEEGENSLIDVKKEEESDESPGRAEFLVRKKKTEDSKS) are compositionally biased toward basic and acidic residues. Positions 175-192 (SKKKMTRNKVKKKSKSKS) are enriched in basic residues. The TF-B3 2 DNA-binding region spans 199–292 (VPEFKITIRK…EFVLLTSKKN (94 aa)).

It is found in the nucleus. This is B3 domain-containing protein At3g17010 from Arabidopsis thaliana (Mouse-ear cress).